The following is a 253-amino-acid chain: MTSTGDSPSIQSLRDLREASCGPVGGAAEGSPTVTNDLSENVILTSLDDLHNWARLSSLWPLLYGTACCFIEFAALLGSRFDFDRFGLVPRSSPRQADLLIVAGTVTMKMGPALVRLYEQMPEPKYVIAMGACTITGGMFSADSTTAVRGVDKLIPVDLYLPGCPPRPEAIFDAVIKLRKKVGNESVSDRRQLKQTHRYCTIDHAMVPVEPIVTGAYLRAETQVAALSPGVGVPMAAPEQTESAEPVSSGASS.

[4Fe-4S] cluster is bound by residues cysteine 68, cysteine 69, cysteine 133, and cysteine 164.

This sequence belongs to the complex I 20 kDa subunit family. NDH-1 can be composed of about 15 different subunits; different subcomplexes with different compositions have been identified which probably have different functions. [4Fe-4S] cluster is required as a cofactor.

It localises to the cellular thylakoid membrane. It catalyses the reaction a plastoquinone + NADH + (n+1) H(+)(in) = a plastoquinol + NAD(+) + n H(+)(out). The catalysed reaction is a plastoquinone + NADPH + (n+1) H(+)(in) = a plastoquinol + NADP(+) + n H(+)(out). NDH-1 shuttles electrons from an unknown electron donor, via FMN and iron-sulfur (Fe-S) centers, to quinones in the respiratory and/or the photosynthetic chain. The immediate electron acceptor for the enzyme in this species is believed to be plastoquinone. Couples the redox reaction to proton translocation, and thus conserves the redox energy in a proton gradient. Cyanobacterial NDH-1 also plays a role in inorganic carbon-concentration. The sequence is that of NAD(P)H-quinone oxidoreductase subunit K from Synechococcus sp. (strain CC9311).